We begin with the raw amino-acid sequence, 699 residues long: Ubiquitin-like modifier-activating enzyme ATG7 (699 aa).

The short motif at glycine 370–glycine 375 is the GXGXXG motif element. The active-site Glycyl thioester intermediate is cysteine 550. The segment at alanine 653 to glutamate 691 is homodimerization.

Belongs to the ATG7 family. Homodimer. Interacts with ATG8 through a thioester bond between Cys-550 and the C-terminal Gly of ATG8 and with ATG12 through a thioester bond between Cys-550 and the C-terminal Gly of ATG12. Also interacts with ATG3.

The protein localises to the cytoplasm. It is found in the preautophagosomal structure. Its function is as follows. E1-like activating enzyme involved in the 2 ubiquitin-like systems required for cytoplasm to vacuole transport (Cvt) and autophagy. Activates ATG12 for its conjugation with ATG5 and ATG8 for its conjugation with phosphatidylethanolamine. Both systems are needed for the ATG8 association to Cvt vesicles and autophagosomes membranes. Autophagy is essential for maintenance of amino acid levels and protein synthesis under nitrogen starvation. Required for selective autophagic degradation of the nucleus (nucleophagy) as well as for mitophagy which contributes to regulate mitochondrial quantity and quality by eliminating the mitochondria to a basal level to fulfill cellular energy requirements and preventing excess ROS production. Required for normal mycelial growth and conidiogenesis. The polypeptide is Ubiquitin-like modifier-activating enzyme ATG7 (Sordaria macrospora (strain ATCC MYA-333 / DSM 997 / K(L3346) / K-hell)).